A 355-amino-acid chain; its full sequence is Protein pelota homolog (355 aa).

It belongs to the eukaryotic release factor 1 family. Pelota subfamily. As to quaternary structure, monomer. A divalent metal cation is required as a cofactor.

It is found in the cytoplasm. Functionally, may function in recognizing stalled ribosomes, interact with stem-loop structures in stalled mRNA molecules, and effect endonucleolytic cleavage of the mRNA. May play a role in the release non-functional ribosomes and degradation of damaged mRNAs. Has endoribonuclease activity. This is Protein pelota homolog from Natronomonas pharaonis (strain ATCC 35678 / DSM 2160 / CIP 103997 / JCM 8858 / NBRC 14720 / NCIMB 2260 / Gabara) (Halobacterium pharaonis).